Here is a 204-residue protein sequence, read N- to C-terminus: Ribosomal RNA small subunit methyltransferase J (204 aa).

S-adenosyl-L-methionine contacts are provided by residues 55 to 56 (RD), 71 to 72 (ER), and aspartate 123.

It belongs to the methyltransferase superfamily. RsmJ family.

The protein resides in the cytoplasm. It carries out the reaction guanosine(1516) in 16S rRNA + S-adenosyl-L-methionine = N(2)-methylguanosine(1516) in 16S rRNA + S-adenosyl-L-homocysteine + H(+). Functionally, specifically methylates the guanosine in position 1516 of 16S rRNA. The polypeptide is Ribosomal RNA small subunit methyltransferase J (Rhodopseudomonas palustris (strain TIE-1)).